Reading from the N-terminus, the 456-residue chain is tRNA modification GTPase MnmE (456 aa).

The (6S)-5-formyl-5,6,7,8-tetrahydrofolate site is built by R23, E80, and K122. Residues 218-380 enclose the TrmE-type G domain; the sequence is AKRIVIVGPP…LKKHLSNRQK (163 aa). N228 lines the K(+) pocket. GTP is bound by residues 228 to 233, 247 to 253, and 272 to 275; these read NAGKSS, TDLPGTT, and DTAG. Position 232 (S232) interacts with Mg(2+). K(+) is bound by residues T247, L249, and T252. T253 serves as a coordination point for Mg(2+). Residue K456 coordinates (6S)-5-formyl-5,6,7,8-tetrahydrofolate.

Belongs to the TRAFAC class TrmE-Era-EngA-EngB-Septin-like GTPase superfamily. TrmE GTPase family. As to quaternary structure, homodimer. Heterotetramer of two MnmE and two MnmG subunits. K(+) is required as a cofactor.

The protein localises to the cytoplasm. Its function is as follows. Exhibits a very high intrinsic GTPase hydrolysis rate. Involved in the addition of a carboxymethylaminomethyl (cmnm) group at the wobble position (U34) of certain tRNAs, forming tRNA-cmnm(5)s(2)U34. The polypeptide is tRNA modification GTPase MnmE (Buchnera aphidicola subsp. Schizaphis graminum (strain Sg)).